We begin with the raw amino-acid sequence, 327 residues long: Serine/threonine-protein phosphatase PP1-1 (327 aa).

The Mn(2+) site is built by D63, H65, D91, and N123. The active-site Proton donor is the H124. H172 and H247 together coordinate Mn(2+). The disordered stretch occupies residues 305-327 (GYQGSSQNWHMTPPRKNKTGNSK). T316 is modified (phosphothreonine; by CDC2). Over residues 317-327 (PPRKNKTGNSK) the composition is skewed to basic residues.

The protein belongs to the PPP phosphatase family. PP-1 subfamily. In terms of assembly, oligomer. Requires Mn(2+) as cofactor.

Its subcellular location is the nucleus. The enzyme catalyses O-phospho-L-seryl-[protein] + H2O = L-seryl-[protein] + phosphate. The catalysed reaction is O-phospho-L-threonyl-[protein] + H2O = L-threonyl-[protein] + phosphate. Functionally, essential role in cell cycle control. PP1 is perhaps required for exit from mitosis. This Schizosaccharomyces pombe (strain 972 / ATCC 24843) (Fission yeast) protein is Serine/threonine-protein phosphatase PP1-1 (dis2).